Here is a 117-residue protein sequence, read N- to C-terminus: Large ribosomal subunit protein bL19 (117 aa).

Belongs to the bacterial ribosomal protein bL19 family.

Its function is as follows. This protein is located at the 30S-50S ribosomal subunit interface and may play a role in the structure and function of the aminoacyl-tRNA binding site. This Bacteroides thetaiotaomicron (strain ATCC 29148 / DSM 2079 / JCM 5827 / CCUG 10774 / NCTC 10582 / VPI-5482 / E50) protein is Large ribosomal subunit protein bL19.